A 78-amino-acid polypeptide reads, in one-letter code: Large ribosomal subunit protein bL28 (78 aa).

The segment at 1 to 23 (MSRVCQVTGKRPITGNNVSHSKR) is disordered.

It belongs to the bacterial ribosomal protein bL28 family.

This chain is Large ribosomal subunit protein bL28, found in Marinomonas sp. (strain MWYL1).